The sequence spans 601 residues: MSTPQNRIRNFCIIAHIDHGKSTLADRILEETGALSQREMTEQVLDKMDLERERGITIKLQAVRLFHRAEDGQEYQLNLIDTPGHVDFTYEVSRSLAACEGALLVVDASQGIEAQTLANVYLALENDLEIIPVINKIDLPSAEPERVKQEIEDVIGLDTSEAVLASAKTGAGIKEILEQVVTKIAPPKGDSEAPLQALIFDSHYDAYRGVIAYIRVVQGTLKPGMRIRMMATKKEFEVTEVGVFTPHMTFVDELKTGEVGLVAASMKNVQDVRVGDTITAAQNPAPAPLPGYRKVTPMVFCGLYPVDTVDYEDLRDALDKLKLNDASLIYEPETSDALGFGFRCGFLGLLHMEIIQERLEREYGLSLITTAPSVVYRVTTTKGEVMEIDNPANLPQVNKIEIIEEPFVKATVMVPKDFVGTVMDLCQGKRGIFSNMEYLGINRVMLTYEIPLSEIIYDFFDQLKSRTKGYASLDYEMIGYRQSELVKMDIMLNGEVLDALSCIVHSERAYTRGRALVEKLRSLIPRQMFEIPVQAAIGNKIIARETVKAMRKDVLAKCYGGDISRKRKLLEKQKEGKRRMKQVGNVEIPQEAFMAVLSIEE.

Positions 6–188 constitute a tr-type G domain; the sequence is NRIRNFCIIA…QVVTKIAPPK (183 aa). Residues 18–23 and 135–138 contribute to the GTP site; these read DHGKST and NKID.

The protein belongs to the TRAFAC class translation factor GTPase superfamily. Classic translation factor GTPase family. LepA subfamily.

The protein localises to the cell membrane. The enzyme catalyses GTP + H2O = GDP + phosphate + H(+). In terms of biological role, required for accurate and efficient protein synthesis under certain stress conditions. May act as a fidelity factor of the translation reaction, by catalyzing a one-codon backward translocation of tRNAs on improperly translocated ribosomes. Back-translocation proceeds from a post-translocation (POST) complex to a pre-translocation (PRE) complex, thus giving elongation factor G a second chance to translocate the tRNAs correctly. Binds to ribosomes in a GTP-dependent manner. This chain is Elongation factor 4, found in Desulforamulus reducens (strain ATCC BAA-1160 / DSM 100696 / MI-1) (Desulfotomaculum reducens).